The primary structure comprises 209 residues: Small ribosomal subunit protein uS4 (209 aa).

An S4 RNA-binding domain is found at 98–161; the sequence is ARLDNVVYRM…RDLEVIKKAV (64 aa).

This sequence belongs to the universal ribosomal protein uS4 family. Part of the 30S ribosomal subunit. Contacts protein S5. The interaction surface between S4 and S5 is involved in control of translational fidelity.

Functionally, one of the primary rRNA binding proteins, it binds directly to 16S rRNA where it nucleates assembly of the body of the 30S subunit. Its function is as follows. With S5 and S12 plays an important role in translational accuracy. In Thermotoga petrophila (strain ATCC BAA-488 / DSM 13995 / JCM 10881 / RKU-1), this protein is Small ribosomal subunit protein uS4.